Here is a 435-residue protein sequence, read N- to C-terminus: MWAPPAAIMGDGPTKKVGNQAPLQTQALQTASLRDGPAKRAVWVRHTSSEPQEPTESKAAKERPKQEVTKAVVVDLGTGYCKCGFAGLPRPTHKISTTVGKPYMETAKTGDNRKETFVGQELNNTNVHLKLVNPLRHGIIVDWDTVQDIWEYLFRQEMKIAPEEHAVLVSDPPLSPHTNREKYAEMLFEAFNTPAMHIAYQSRLSMYSYGRTSGLVVEVGHGVSYVVPIYEGYPLPSITGRLDYAGSDLTAYLLGLLNSAGNEFTQDQMGIVEDIKKKCCFVALDPIEEKKVPLSEHTIRYVLPDGKEIQLCQERFLCSEMFFKPSLIKSMQLGLHTQTVSCLNKCDIALKRDLMGNILLCGGSTMLSGFPNRLQKELSSMCPNDTPQVNVLPERDSAVWTGGSILASLQGFQPLWVHRFEYEEHGPFFLYRRCF.

Residues 1–64 (MWAPPAAIMG…TESKAAKERP (64 aa)) are disordered. Residues 20–31 (QAPLQTQALQTA) show a composition bias toward low complexity. The required for interaction with TES stretch occupies residues 31 to 51 (ASLRDGPAKRAVWVRHTSSEP). Over residues 55–64 (TESKAAKERP) the composition is skewed to basic and acidic residues.

Belongs to the actin family. As to quaternary structure, interacts (via N-terminus) with TES (via LIM domain 2). Heterodimer with TES; the heterodimer interacts with ENAH to form a heterotrimer. Interacts with ACTL9. Interacts with CYLC1; the interaction may be relevant for proper acrosome attachment to the nuclear envelope. Strongly expressed in testis. Also expressed in other tissues.

The protein localises to the cytoplasm. Its subcellular location is the cytoskeleton. The protein resides in the golgi apparatus. It localises to the nucleus. It is found in the cytoplasmic vesicle. The protein localises to the secretory vesicle. Its subcellular location is the acrosome. Functionally, essential for normal spermatogenesis and male fertility. Required for normal sperm head morphology, acroplaxome formation, acrosome attachment, and acrosome granule stability. May anchor and stabilize acrosomal adherence to the acroplaxome at least in part by facilitating the presence of F-actin in the subacrosomal space. May play an important role in formation and fusion of Golgi-derived vesicles during acrosome biogenesis. This Homo sapiens (Human) protein is Actin-like protein 7A (ACTL7A).